Consider the following 523-residue polypeptide: Type 2 DNA topoisomerase 6 subunit B (523 aa).

Residues Asn-48, Asp-80, Ser-101 to Lys-102, Gly-110 to Ser-117, and Lys-436 each bind ATP.

This sequence belongs to the TOP6B family. In terms of assembly, homodimer. Heterotetramer of two Top6A and two Top6B chains.

It carries out the reaction ATP-dependent breakage, passage and rejoining of double-stranded DNA.. Relaxes both positive and negative superturns and exhibits a strong decatenase activity. The polypeptide is Type 2 DNA topoisomerase 6 subunit B (Methanothermobacter thermautotrophicus (strain ATCC 29096 / DSM 1053 / JCM 10044 / NBRC 100330 / Delta H) (Methanobacterium thermoautotrophicum)).